We begin with the raw amino-acid sequence, 462 residues long: Putative ABC transporter A445L (462 aa).

The protein belongs to the protein kinase superfamily. ADCK protein kinase family.

In Chlorella (PBCV-1), this protein is Putative ABC transporter A445L.